The primary structure comprises 159 residues: Phosphopantetheine adenylyltransferase (159 aa).

Residue S8 coordinates substrate. ATP is bound by residues 8 to 9 (SF) and H16. The substrate site is built by K40, T72, and R86. Residues 87–89 (GLR), E97, and 122–128 (HSFVSSS) contribute to the ATP site.

The protein belongs to the bacterial CoaD family. In terms of assembly, homohexamer. Requires Mg(2+) as cofactor.

Its subcellular location is the cytoplasm. The catalysed reaction is (R)-4'-phosphopantetheine + ATP + H(+) = 3'-dephospho-CoA + diphosphate. Its pathway is cofactor biosynthesis; coenzyme A biosynthesis; CoA from (R)-pantothenate: step 4/5. Functionally, reversibly transfers an adenylyl group from ATP to 4'-phosphopantetheine, yielding dephospho-CoA (dPCoA) and pyrophosphate. The sequence is that of Phosphopantetheine adenylyltransferase from Synechococcus sp. (strain JA-2-3B'a(2-13)) (Cyanobacteria bacterium Yellowstone B-Prime).